Reading from the N-terminus, the 591-residue chain is Oligopeptide-binding protein OppA (591 aa).

It belongs to the bacterial solute-binding protein 5 family. The complex is composed of an ATP-binding protein (OppD), two transmembrane proteins (OppB and OppC) and a solute-binding protein (OppA).

Its subcellular location is the periplasm. Part of the ABC transporter complex OppABCD involved in the uptake of oligopeptides. Peptide-binding protein that shows broad specificity but a moderate preference for hydrophobic oligopeptides and those that are 6-16 amino acids long. This chain is Oligopeptide-binding protein OppA, found in Mycobacterium bovis (strain ATCC BAA-935 / AF2122/97).